A 199-amino-acid chain; its full sequence is Recombination protein RecR (199 aa).

A C4-type zinc finger spans residues 57 to 72 (CSVCGNITEDDPCPIC). In terms of domain architecture, Toprim spans 80–176 (SRVLVVERSR…KVTRLAHGLS (97 aa)).

It belongs to the RecR family.

In terms of biological role, may play a role in DNA repair. It seems to be involved in an RecBC-independent recombinational process of DNA repair. It may act with RecF and RecO. The polypeptide is Recombination protein RecR (Limosilactobacillus fermentum (strain NBRC 3956 / LMG 18251) (Lactobacillus fermentum)).